Consider the following 84-residue polypeptide: Small ribosomal subunit protein eS27w (84 aa).

The C4-type zinc finger occupies 39-61 (CQGCFNITTVFSHSQTVVVCGNC).

The protein belongs to the eukaryotic ribosomal protein eS27 family. Zn(2+) is required as a cofactor.

This chain is Small ribosomal subunit protein eS27w (RPS27D), found in Arabidopsis thaliana (Mouse-ear cress).